The chain runs to 331 residues: Adenosine deaminase (331 aa).

Zn(2+)-binding residues include His12 and His14. Substrate-binding residues include His14, Asp16, and Gly170. His197 provides a ligand contact to Zn(2+). The Proton donor role is filled by Glu200. Asp278 is a binding site for Zn(2+). Residue Asp279 coordinates substrate.

Belongs to the metallo-dependent hydrolases superfamily. Adenosine and AMP deaminases family. Adenosine deaminase subfamily. Requires Zn(2+) as cofactor.

The enzyme catalyses adenosine + H2O + H(+) = inosine + NH4(+). It catalyses the reaction 2'-deoxyadenosine + H2O + H(+) = 2'-deoxyinosine + NH4(+). Functionally, catalyzes the hydrolytic deamination of adenosine and 2-deoxyadenosine. This Shewanella loihica (strain ATCC BAA-1088 / PV-4) protein is Adenosine deaminase.